We begin with the raw amino-acid sequence, 235 residues long: Phosphoribosylaminoimidazole-succinocarboxamide synthase (235 aa).

Belongs to the SAICAR synthetase family.

It carries out the reaction 5-amino-1-(5-phospho-D-ribosyl)imidazole-4-carboxylate + L-aspartate + ATP = (2S)-2-[5-amino-1-(5-phospho-beta-D-ribosyl)imidazole-4-carboxamido]succinate + ADP + phosphate + 2 H(+). It functions in the pathway purine metabolism; IMP biosynthesis via de novo pathway; 5-amino-1-(5-phospho-D-ribosyl)imidazole-4-carboxamide from 5-amino-1-(5-phospho-D-ribosyl)imidazole-4-carboxylate: step 1/2. The protein is Phosphoribosylaminoimidazole-succinocarboxamide synthase of Thermococcus kodakarensis (strain ATCC BAA-918 / JCM 12380 / KOD1) (Pyrococcus kodakaraensis (strain KOD1)).